Here is a 313-residue protein sequence, read N- to C-terminus: tRNA dimethylallyltransferase (313 aa).

Gly-11 to Thr-18 is an ATP binding site. Thr-13–Thr-18 is a substrate binding site. 3 interaction with substrate tRNA regions span residues Asp-36 to Leu-39, Gln-160 to Arg-164, and Arg-243 to Arg-248.

Belongs to the IPP transferase family. As to quaternary structure, monomer. The cofactor is Mg(2+).

The enzyme catalyses adenosine(37) in tRNA + dimethylallyl diphosphate = N(6)-dimethylallyladenosine(37) in tRNA + diphosphate. Its function is as follows. Catalyzes the transfer of a dimethylallyl group onto the adenine at position 37 in tRNAs that read codons beginning with uridine, leading to the formation of N6-(dimethylallyl)adenosine (i(6)A). This Neisseria meningitidis serogroup A / serotype 4A (strain DSM 15465 / Z2491) protein is tRNA dimethylallyltransferase.